The sequence spans 240 residues: MRIDVLTLFPEMFSIFNHSIIGRAIEKEILKINTVNIRDYTIDKHKKVDDYPYGGGAGMVMAAQPIVDSIKTVKKENKGKVIFLGPKGKTFNQNLAKELAKEEELIFLCGHYEGIDERAYEYIDMEISLGDFVLTGGEMACIPIVDSICRLVDGVLKSSESYEDESFYNGLLEYPQYTRPATYEGKSVPEVLLSGHHENIKKWRKAKSLIITNKVRPDLFKKYKLTEEDKKILKDFNKKL.

S-adenosyl-L-methionine-binding positions include G110 and 129-134 (LGDFVL).

Belongs to the RNA methyltransferase TrmD family. Homodimer.

It is found in the cytoplasm. It carries out the reaction guanosine(37) in tRNA + S-adenosyl-L-methionine = N(1)-methylguanosine(37) in tRNA + S-adenosyl-L-homocysteine + H(+). Its function is as follows. Specifically methylates guanosine-37 in various tRNAs. The protein is tRNA (guanine-N(1)-)-methyltransferase of Clostridium botulinum (strain Langeland / NCTC 10281 / Type F).